A 191-amino-acid chain; its full sequence is Inosine triphosphate pyrophosphatase (191 aa).

15 to 20 (TGNANK) lines the ITP pocket. Position 43 (Glu43) interacts with Mg(2+). ITP-binding positions include Lys55, 71–72 (DT), Lys88, 147–150 (FGWD), Lys168, and 173–174 (HR).

It belongs to the HAM1 NTPase family. As to quaternary structure, homodimer. Mg(2+) serves as cofactor. Requires Mn(2+) as cofactor.

It is found in the cytoplasm. It localises to the nucleus. The enzyme catalyses ITP + H2O = IMP + diphosphate + H(+). The catalysed reaction is dITP + H2O = dIMP + diphosphate + H(+). It carries out the reaction XTP + H2O = XMP + diphosphate + H(+). Its function is as follows. Pyrophosphatase that hydrolyzes non-canonical purine nucleotides such as inosine triphosphate (ITP), deoxyinosine triphosphate (dITP) or xanthosine 5'-triphosphate (XTP) to their respective monophosphate derivatives. The enzyme does not distinguish between the deoxy- and ribose forms. Probably excludes non-canonical purines from RNA and DNA precursor pools, thus preventing their incorporation into RNA and DNA and avoiding chromosomal lesions. The sequence is that of Inosine triphosphate pyrophosphatase from Neurospora crassa (strain ATCC 24698 / 74-OR23-1A / CBS 708.71 / DSM 1257 / FGSC 987).